The following is a 236-amino-acid chain: Exosome complex component Rrp4 (236 aa).

The S1 motif domain occupies 64-133 (GDKVIGKVIE…EIKESWLTLK (70 aa)). Residues 141 to 199 (EGGHMVLIHASRVPRVIGKGGGMVNMVKELTATRIIIGQNGLIWIDGPIEGVTMAIAAI) form the KH domain.

It belongs to the RRP4 family. In terms of assembly, component of the archaeal exosome complex. Forms a trimer of Rrp4 and/or Csl4 subunits. The trimer associates with a hexameric ring-like arrangement composed of 3 Rrp41-Rrp42 heterodimers.

The protein resides in the cytoplasm. Its function is as follows. Non-catalytic component of the exosome, which is a complex involved in RNA degradation. Increases the RNA binding and the efficiency of RNA degradation. Confers strong poly(A) specificity to the exosome. The chain is Exosome complex component Rrp4 from Thermoplasma acidophilum (strain ATCC 25905 / DSM 1728 / JCM 9062 / NBRC 15155 / AMRC-C165).